A 125-amino-acid polypeptide reads, in one-letter code: Small ribosomal subunit protein eS8 (125 aa).

It belongs to the eukaryotic ribosomal protein eS8 family. As to quaternary structure, part of the 30S ribosomal subunit.

The chain is Small ribosomal subunit protein eS8 from Methanosarcina barkeri (strain Fusaro / DSM 804).